Reading from the N-terminus, the 473-residue chain is MVTFMVFGASGNLANKKTFPALFHLFKRNLVDRSSFYVLGYARSKIPIGEFRESIRESVKPDTESKQVFQDFIDRVSYFSGQYDQSSSYVEFRKHLESVEKKADSSKALRIFYIALPPSVYVTVSSHIYENLYLPGKSRLVIEKPFGKNYQSAVKLKEEVHKHWKEEEIYRIDHYTAKDMVNNFFTLRFANSSSIDAVLNRHSIQSVEIHMYETGGCEGRIGYYDANGVVRDVVQNHLTQIFCIAAMNEPKSASASDVRAEKVNLLKATRPASLKESMLGQYTTSEDGKIPGYLDLEGVPKDSKATTFAASTLHVDNDRWKGVPFVFVSGKRMKKGEVYIKYYFRLKDSGIFSDVKRRRYLILHVQPEEFVNLTCTINKPMTTDLQPIDAYASLNYNEQFKDLMKEKRDGYEILFEDAIRGDPTKFIRYDEVEYAWKIWDEILDSPKKPIPYPAGSDGPEGLEAYMKRHLGHE.

NADP(+) is bound by residues Arg43, Tyr121, and Lys144. D-glucose 6-phosphate contacts are provided by residues Lys144, 174 to 178 (HYTAK), Glu213, and Asp232. The Proton acceptor role is filled by His237. Residue Lys331 participates in D-glucose 6-phosphate binding. Lys341 lines the NADP(+) pocket. Residue Gln366 participates in D-glucose 6-phosphate binding.

Belongs to the glucose-6-phosphate dehydrogenase family.

It is found in the cytoplasm. It catalyses the reaction D-glucose 6-phosphate + NADP(+) = 6-phospho-D-glucono-1,5-lactone + NADPH + H(+). It functions in the pathway carbohydrate degradation; pentose phosphate pathway; D-ribulose 5-phosphate from D-glucose 6-phosphate (oxidative stage): step 1/3. Functionally, catalyzes the rate-limiting step of the oxidative pentose-phosphate pathway, which represents a route for the dissimilation of carbohydrates besides glycolysis. The main function of this enzyme is to provide reducing power (NADPH) and pentose phosphates for fatty acid and nucleic acid synthesis. The chain is Probable glucose-6-phosphate 1-dehydrogenase C7.13c from Schizosaccharomyces pombe (strain 972 / ATCC 24843) (Fission yeast).